The sequence spans 94 residues: Large ribosomal subunit protein bL27 (94 aa).

A propeptide spanning residues 1–10 (MQFLFNIQLF) is cleaved from the precursor.

This sequence belongs to the bacterial ribosomal protein bL27 family. In terms of processing, the N-terminus is cleaved by ribosomal processing cysteine protease Prp.

The sequence is that of Large ribosomal subunit protein bL27 from Fusobacterium nucleatum subsp. nucleatum (strain ATCC 25586 / DSM 15643 / BCRC 10681 / CIP 101130 / JCM 8532 / KCTC 2640 / LMG 13131 / VPI 4355).